A 320-amino-acid chain; its full sequence is Porphobilinogen deaminase (320 aa).

The residue at position 251 (Cys251) is an S-(dipyrrolylmethanemethyl)cysteine.

This sequence belongs to the HMBS family. In terms of assembly, monomer. Dipyrromethane is required as a cofactor.

The catalysed reaction is 4 porphobilinogen + H2O = hydroxymethylbilane + 4 NH4(+). It participates in porphyrin-containing compound metabolism; protoporphyrin-IX biosynthesis; coproporphyrinogen-III from 5-aminolevulinate: step 2/4. Its function is as follows. Tetrapolymerization of the monopyrrole PBG into the hydroxymethylbilane pre-uroporphyrinogen in several discrete steps. The chain is Porphobilinogen deaminase from Phenylobacterium zucineum (strain HLK1).